Reading from the N-terminus, the 141-residue chain is ATP synthase epsilon chain (141 aa).

It belongs to the ATPase epsilon chain family. F-type ATPases have 2 components, CF(1) - the catalytic core - and CF(0) - the membrane proton channel. CF(1) has five subunits: alpha(3), beta(3), gamma(1), delta(1), epsilon(1). CF(0) has three main subunits: a, b and c.

It localises to the cell inner membrane. In terms of biological role, produces ATP from ADP in the presence of a proton gradient across the membrane. The protein is ATP synthase epsilon chain of Halorhodospira halophila (strain DSM 244 / SL1) (Ectothiorhodospira halophila (strain DSM 244 / SL1)).